The primary structure comprises 982 residues: Bifunctional glutamine synthetase adenylyltransferase/adenylyl-removing enzyme (982 aa).

The segment at 1–460 (MSLPSLANLP…HFRQVIADPD (460 aa)) is adenylyl removase. The adenylyl transferase stretch occupies residues 473–982 (GAEWIPLWEE…IRIWRELRLG (510 aa)).

Belongs to the GlnE family. Mg(2+) serves as cofactor.

It catalyses the reaction [glutamine synthetase]-O(4)-(5'-adenylyl)-L-tyrosine + phosphate = [glutamine synthetase]-L-tyrosine + ADP. The enzyme catalyses [glutamine synthetase]-L-tyrosine + ATP = [glutamine synthetase]-O(4)-(5'-adenylyl)-L-tyrosine + diphosphate. In terms of biological role, involved in the regulation of glutamine synthetase GlnA, a key enzyme in the process to assimilate ammonia. When cellular nitrogen levels are high, the C-terminal adenylyl transferase (AT) inactivates GlnA by covalent transfer of an adenylyl group from ATP to specific tyrosine residue of GlnA, thus reducing its activity. Conversely, when nitrogen levels are low, the N-terminal adenylyl removase (AR) activates GlnA by removing the adenylyl group by phosphorolysis, increasing its activity. The regulatory region of GlnE binds the signal transduction protein PII (GlnB) which indicates the nitrogen status of the cell. The protein is Bifunctional glutamine synthetase adenylyltransferase/adenylyl-removing enzyme of Pseudomonas aeruginosa (strain ATCC 15692 / DSM 22644 / CIP 104116 / JCM 14847 / LMG 12228 / 1C / PRS 101 / PAO1).